The sequence spans 484 residues: Cysteine--tRNA ligase (484 aa).

Cys-29 provides a ligand contact to Zn(2+). Positions Pro-31 to His-41 match the 'HIGH' region motif. Residues Cys-219, His-244, and Glu-248 each coordinate Zn(2+). Residues Lys-275–Ser-279 carry the 'KMSKS' region motif. Lys-278 is a binding site for ATP.

The protein belongs to the class-I aminoacyl-tRNA synthetase family. Monomer. Requires Zn(2+) as cofactor.

The protein resides in the cytoplasm. The catalysed reaction is tRNA(Cys) + L-cysteine + ATP = L-cysteinyl-tRNA(Cys) + AMP + diphosphate. The protein is Cysteine--tRNA ligase of Clavibacter michiganensis subsp. michiganensis (strain NCPPB 382).